Here is a 348-residue protein sequence, read N- to C-terminus: Lipopolysaccharide heptosyltransferase 2 (348 aa).

It belongs to the glycosyltransferase 9 family.

The catalysed reaction is an L-alpha-D-Hep-(1-&gt;5)-[alpha-Kdo-(2-&gt;4)]-alpha-Kdo-(2-&gt;6)-lipid A + ADP-L-glycero-beta-D-manno-heptose = an L-alpha-D-Hep-(1-&gt;3)-L-alpha-D-Hep-(1-&gt;5)-[alpha-Kdo-(2-&gt;4)]-alpha-Kdo-(2-&gt;6)-lipid A + ADP + H(+). It functions in the pathway bacterial outer membrane biogenesis; LPS core biosynthesis. Functionally, glycosyltransferase involved in the biosynthesis of the core oligosaccharide region of lipopolysaccharide (LPS). Catalyzes the addition of the second heptose unit to the heptosyl-Kdo2-lipid A module. The polypeptide is Lipopolysaccharide heptosyltransferase 2 (Salmonella typhimurium (strain LT2 / SGSC1412 / ATCC 700720)).